The sequence spans 204 residues: Phosphatidylserine decarboxylase proenzyme (204 aa).

Serine 169 serves as the catalytic Schiff-base intermediate with substrate; via pyruvic acid. Serine 169 is subject to Pyruvic acid (Ser); by autocatalysis.

It belongs to the phosphatidylserine decarboxylase family. PSD-A subfamily. As to quaternary structure, heterodimer of a large membrane-associated beta subunit and a small pyruvoyl-containing alpha subunit. It depends on pyruvate as a cofactor. In terms of processing, is synthesized initially as an inactive proenzyme. Formation of the active enzyme involves a self-maturation process in which the active site pyruvoyl group is generated from an internal serine residue via an autocatalytic post-translational modification. Two non-identical subunits are generated from the proenzyme in this reaction, and the pyruvate is formed at the N-terminus of the alpha chain, which is derived from the carboxyl end of the proenzyme. The post-translation cleavage follows an unusual pathway, termed non-hydrolytic serinolysis, in which the side chain hydroxyl group of the serine supplies its oxygen atom to form the C-terminus of the beta chain, while the remainder of the serine residue undergoes an oxidative deamination to produce ammonia and the pyruvoyl prosthetic group on the alpha chain.

Its subcellular location is the cell membrane. It catalyses the reaction a 1,2-diacyl-sn-glycero-3-phospho-L-serine + H(+) = a 1,2-diacyl-sn-glycero-3-phosphoethanolamine + CO2. The protein operates within phospholipid metabolism; phosphatidylethanolamine biosynthesis; phosphatidylethanolamine from CDP-diacylglycerol: step 2/2. Its function is as follows. Catalyzes the formation of phosphatidylethanolamine (PtdEtn) from phosphatidylserine (PtdSer). In Solibacter usitatus (strain Ellin6076), this protein is Phosphatidylserine decarboxylase proenzyme.